Reading from the N-terminus, the 650-residue chain is SPARC-like protein 1 (650 aa).

The signal sequence occupies residues 1–16 (MKAVLLLLCALGTAVA). The tract at residues 51-352 (TADIENHPSD…HGAGDDYFIP (302 aa)) is disordered. A compositionally biased stretch (basic and acidic residues) spans 54 to 64 (IENHPSDKAEK). Phosphoserine is present on residues Ser70, Ser78, and Ser86. The span at 75–85 (HEQSTEQDKTY) shows a compositional bias: basic and acidic residues. The span at 91–101 (LKDEEDGDGDL) shows a compositional bias: acidic residues. Composition is skewed to polar residues over residues 116-126 (EGTSEPQQKSL) and 135-148 (TVST…QRAN). An N-linked (GlcNAc...) asparagine glycan is attached at Asn148. Residues Ser155 and Ser163 each carry the phosphoserine modification. Polar residues predominate over residues 157–174 (EQPVSDSHQQPNESSKQT). An N-linked (GlcNAc...) asparagine glycan is attached at Asn168. Residues 189–210 (IPNEEEEEEEDEEEEEEEEPED) are compositionally biased toward acidic residues. The residue at position 272 (Ser272) is a Phosphoserine. The segment covering 277-299 (EDKAAGSKEHIPHTEQQDQEGKA) has biased composition (basic and acidic residues). Ser353 carries the phosphoserine modification. Residues 375-415 (EETTTGESENRREAADNQEAKKAESSPNAEPSDEGNSREHS) are disordered. Basic and acidic residues predominate over residues 382–398 (SENRREAADNQEAKKAE). A Phosphoserine modification is found at Ser406. The Follistatin-like domain maps to 418–440 (SCTNFQCKRGHICKTDPQGKPHC). 7 cysteine pairs are disulfide-bonded: Cys419–Cys430, Cys424–Cys440, Cys442–Cys476, Cys448–Cys469, Cys458–Cys495, Cys501–Cys612, and Cys620–Cys636. Residues 436-497 (GKPHCVCQDP…QLDYFGACKS (62 aa)) enclose the Kazal-like domain. Residue Asn462 is glycosylated (N-linked (GlcNAc...) asparagine). An EF-hand domain is found at 608–643 (PMEHCITRFFEECDPNKDKHITLKEWGHCFGIKEED). Residues Asp621, Asn623, Asp625, His627, and Glu632 each coordinate Ca(2+).

This sequence belongs to the SPARC family. In terms of tissue distribution, highest expression in brain. Moderate levels in heart, adrenal gland, epididymis and lung. Low levels in kidney, eye, liver, spleen, submandibular gland and testis.

The protein resides in the secreted. It is found in the extracellular space. It localises to the extracellular matrix. This is SPARC-like protein 1 (Sparcl1) from Mus musculus (Mouse).